Consider the following 387-residue polypeptide: Patatin group A-3 (387 aa).

Positions 1-23 (MATTKSFLILIVMILATTSSTFA) are cleaved as a signal peptide. Positions 32–230 (LSIDGGGVKG…TVADPALLSV (199 aa)) constitute a PNPLA domain. The GXGXXG motif lies at 36–41 (GGGVKG). The GXSXG signature appears at 75 to 79 (GTSTG). Serine 77 (nucleophile) is an active-site residue. Asparagine 115 carries N-linked (GlcNAc...) asparagine glycosylation. Aspartate 216 functions as the Proton acceptor in the catalytic mechanism. The DGA/G motif lies at 216 to 218 (DGA). Residues 361–385 (ETYEEALKRFAKLLSDRKKLRANKA) adopt a coiled-coil conformation.

Belongs to the patatin family. As to expression, tuber and stolon.

The protein localises to the vacuole. In terms of biological role, probable lipolytic acyl hydrolase (LAH), an activity which is thought to be involved in the response of tubers to pathogens. This chain is Patatin group A-3, found in Solanum tuberosum (Potato).